Reading from the N-terminus, the 421-residue chain is Ankyrin repeat and SOCS box protein 6 (421 aa).

ANK repeat units follow at residues 67–97 (EGVSNALLKMAELGLTRAADVLLRHGANLNF), 102–131 (TYYTALHIAVLRNQPDMVELLVHHGADVNR), 136–166 (HESSPLDLASEEPERLPCLQRLLDLGADVNA), 170–205 (HGKTALLHALASSDGVQIHNTENIRLLLEGGADVKA), 226–255 (GGDKEEAQMINRFCFQVTRLLLAHGADPSE), and 260–289 (ESLTHICLKSFKLHFPLLRFLLESGAAYNC). One can recognise an SOCS box domain in the interval 360–415 (ALHFSLRQLESYPPPLKHLCRVAIRLYLQPWPVDVKVKALPLPDRLKWYLLSEHSG).

The protein belongs to the ankyrin SOCS box (ASB) family. Binds APS. Identified in a complex with ELOB and ELOC. Interacts with CUL5 and RNF7. Interacts with SQSTM1. Post-translationally, ubiquitinated by RNF41; leading to proteasomal degradation.

It localises to the cytoplasm. Its pathway is protein modification; protein ubiquitination. Its function is as follows. Probable substrate-recognition component of a SCF-like ECS (Elongin-Cullin-SOCS-box protein) E3 ubiquitin-protein ligase complex which mediates the ubiquitination and subsequent proteasomal degradation of target proteins. May play a role in the regulation of cell proliferation and autophagy by promoting the ubiquitination and degradation of SQSTM1. This Homo sapiens (Human) protein is Ankyrin repeat and SOCS box protein 6 (ASB6).